We begin with the raw amino-acid sequence, 862 residues long: Autotaxin (862 aa).

A signal peptide spans 1 to 27 (MARQGCFGSYQVISLFTFAIGVNLCLG). Positions 28-35 (FTASRIKR) are cleaved as a propeptide — removed by furin. N-linked (GlcNAc...) asparagine glycosylation is present at Asn53. 2 SMB domains span residues 54 to 97 (TSGS…LKTA) and 98 to 142 (RGWE…GESH). Cystine bridges form between Cys58–Cys75, Cys62–Cys93, Cys73–Cys86, Cys79–Cys85, Cys102–Cys119, Cys107–Cys137, Cys117–Cys130, Cys123–Cys129, Cys148–Cys194, and Cys156–Cys350. Residues 126–128 (RGD) carry the Cell attachment site motif. A phosphodiesterase domain region spans residues 144 to 501 (VDDDCEEIRV…PTFKYRTKVP (358 aa)). Zn(2+) contacts are provided by Asp171 and Thr209. Thr209 acts as the Nucleophile in catalysis. Positions 209, 230, and 311 each coordinate 1-(9Z-octadecenoyl)-sn-glycero-3-phosphate. 3 residues coordinate 1-hexadecanoyl-sn-glycero-3-phosphate: Thr209, Asn230, and Asp311. 1-tetradecanoyl-sn-glycerol 3-phosphate is bound by residues Thr209, Asn230, and Asp311. The Zn(2+) site is built by Asp311, His315, Asp358, and His359. Cystine bridges form between Cys366–Cys468, Cys413–Cys805, Cys566–Cys666, Cys568–Cys651, and Cys774–Cys784. N-linked (GlcNAc...) asparagine glycosylation is present at Asn410. His474 contacts Zn(2+). Residue His474 coordinates 1-(9Z-octadecenoyl)-sn-glycero-3-phosphate. His474 provides a ligand contact to 1-hexadecanoyl-sn-glycero-3-phosphate. His474 serves as a coordination point for 1-tetradecanoyl-sn-glycerol 3-phosphate. Asn524 is a glycosylation site (N-linked (GlcNAc...) asparagine). The segment at 597-862 (LYGRPAVLYR…TYLHTYESEI (266 aa)) is nuclease-like domain. Asp739, Asn741, Asn743, Leu745, and Asp747 together coordinate Ca(2+). The N-linked (GlcNAc...) asparagine glycan is linked to Asn806. Residues 829 to 850 (IEHLTGLDFYRKTSRSYSEILT) are required for secretion.

It belongs to the nucleotide pyrophosphatase/phosphodiesterase family. Requires Zn(2+) as cofactor. Ca(2+) serves as cofactor. N-glycosylation, but not furin-cleavage, plays a critical role on secretion and on lysoPLD activity. Secretion requires simultaneous glycosylation on Asn-53 and Asn-410, while probable glycosylation of Asn-410 has a preferential role on lysoPLD activity. Not O-glycosylated. Post-translationally, the interdomain disulfide bond between Cys-413 and Cys-805 is essential for catalytic activity. As to expression, expressed in brain and adipose tissue.

Its subcellular location is the secreted. It catalyses the reaction a 1-O-alkyl-sn-glycero-3-phosphoethanolamine + H2O = a 1-O-alkyl-sn-glycero-3-phosphate + ethanolamine + H(+). It carries out the reaction a 1-acyl-sn-glycero-3-phosphoethanolamine + H2O = a 1-acyl-sn-glycero-3-phosphate + ethanolamine + H(+). The catalysed reaction is 1-(9Z-octadecenoyl)-sn-glycero-3-phosphoethanolamine + H2O = 1-(9Z-octadecenoyl)-sn-glycero-3-phosphate + ethanolamine + H(+). The enzyme catalyses a 1-O-alkyl-sn-glycero-3-phosphocholine + H2O = a 1-O-alkyl-sn-glycero-3-phosphate + choline + H(+). It catalyses the reaction 1-O-(9Z-octadecenyl)-sn-glycero-3-phosphocholine + H2O = 1-O-(9Z-octadecenyl)-sn-glycero-3-phosphate + choline + H(+). It carries out the reaction 1-O-hexadecyl-sn-glycero-3-phosphocholine + H2O = 1-O-hexadecyl-sn-glycero-3-phosphate + choline + H(+). The catalysed reaction is a 1-O-(1Z-alkenyl)-sn-glycero-3-phosphocholine + H2O = a 1-O-(1Z-alkenyl)-sn-glycero-3-phosphate + choline + H(+). The enzyme catalyses a 1-acyl-sn-glycero-3-phosphocholine + H2O = a 1-acyl-sn-glycero-3-phosphate + choline + H(+). It catalyses the reaction 1-dodecanoyl-sn-glycero-3-phosphocholine + H2O = 1-dodecanoyl-sn-glycerol 3-phosphate + choline + H(+). It carries out the reaction 1-(9Z-octadecenoyl)-sn-glycero-3-phosphocholine + H2O = 1-(9Z-octadecenoyl)-sn-glycero-3-phosphate + choline + H(+). The catalysed reaction is 1-tetradecanoyl-sn-glycero-3-phosphocholine + H2O = 1-tetradecanoyl-sn-glycerol 3-phosphate + choline + H(+). The enzyme catalyses 1-decanoyl-sn-glycero-3-phosphocholine + H2O = 1-decanoyl-sn-glycero-3-phosphate + choline + H(+). It catalyses the reaction 1-octadecanoyl-sn-glycero-3-phosphocholine + H2O = 1-octadecanoyl-sn-glycero-3-phosphate + choline + H(+). It carries out the reaction 1-hexadecanoyl-sn-glycero-3-phosphocholine + H2O = 1-hexadecanoyl-sn-glycero-3-phosphate + choline + H(+). The catalysed reaction is 1-hexanoyl-sn-glycero-3-phosphocholine + H2O = 1-hexanoyl-sn-glycero-3-phosphate + choline + H(+). The enzyme catalyses 1-(9Z,12Z)-octadecadienoyl-sn-glycero-3-phosphocholine + H2O = 1-(9Z,12Z)-octadecadienoyl-sn-glycero-3-phosphate + choline + H(+). It catalyses the reaction sphing-4-enine-phosphocholine + H2O = sphing-4-enine 1-phosphate + choline + H(+). It carries out the reaction 1-(5Z,8Z,11Z,14Z-eicosatetraenoyl)-sn-glycero-3-phosphocholine + H2O = 1-(5Z,8Z,11Z,14Z-eicosatetraenoyl)-sn-glycero-3-phosphate + choline + H(+). The catalysed reaction is a 2-acyl-sn-glycero-3-phosphocholine + H2O = a 2-acyl-sn-glycerol 3-phosphate + choline + H(+). The enzyme catalyses a 1,2-diacyl-sn-glycero-3-phosphocholine + H2O = a 1,2-diacyl-sn-glycero-3-phosphate + choline + H(+). It catalyses the reaction 1,2-dioctanoyl-sn-glycero-3-phosphocholine + H2O = 1,2-dioctanoyl-sn-glycero-3-phosphate + choline + H(+). It carries out the reaction 1,2-didecanoyl-sn-glycero-3-phosphocholine + H2O = 1,2-didecanoyl-sn-glycero-3-phosphate + choline + H(+). The catalysed reaction is a 1-acyl-sn-glycero-3-phospho-L-serine + H2O = a 1-acyl-sn-glycero-3-phosphate + L-serine + H(+). The enzyme catalyses 1-(9Z-octadecenoyl)-sn-glycero-3-phospho-L-serine + H2O = 1-(9Z-octadecenoyl)-sn-glycero-3-phosphate + L-serine + H(+). It catalyses the reaction a 2-acyl-sn-glycero-3-phospho-L-serine + H2O = a 2-acyl-sn-glycerol 3-phosphate + L-serine + H(+). With respect to regulation, inhibited by EDTA and EGTA. Secreted lysophospholipase D that hydrolyzes lysophospholipids to produce the signaling molecule lysophosphatidic acid (LPA) in extracellular fluids. Its major substrate is lysophosphatidylcholine. Can also act on sphingosylphosphorylcholine producing sphingosine-1-phosphate, a modulator of cell motility. Can hydrolyze, in vitro, bis-pNPP, to some extent pNP-TMP, and barely ATP. Involved in several motility-related processes such as angiogenesis and neurite outgrowth. Acts as an angiogenic factor by stimulating migration of smooth muscle cells and microtubule formation. Stimulates migration of melanoma cells, probably via a pertussis toxin-sensitive G protein. May have a role in induction of parturition. Possible involvement in cell proliferation and adipose tissue development. Required for LPA production in activated platelets, cleaves the sn-1 lysophospholipids to generate sn-1 lysophosphatidic acids containing predominantly 18:2 and 20:4 fatty acids. Shows a preference for the sn-1 to the sn-2 isomer of 1-O-alkyl-sn-glycero-3-phosphocholine (lyso-PAF). The protein is Autotaxin of Mus musculus (Mouse).